Reading from the N-terminus, the 348-residue chain is Probable dual-specificity RNA methyltransferase RlmN (348 aa).

The active-site Proton acceptor is the E93. Residues 99–333 (TEKRLTACLS…VSLRKSRGLD (235 aa)) enclose the Radical SAM core domain. Residues C106 and C338 are joined by a disulfide bond. [4Fe-4S] cluster contacts are provided by C113, C117, and C120. S-adenosyl-L-methionine contacts are provided by residues 160–161 (GE), S190, 219–221 (SLH), and N295. The active-site S-methylcysteine intermediate is C338.

This sequence belongs to the radical SAM superfamily. RlmN family. Requires [4Fe-4S] cluster as cofactor.

It is found in the cytoplasm. The enzyme catalyses adenosine(2503) in 23S rRNA + 2 reduced [2Fe-2S]-[ferredoxin] + 2 S-adenosyl-L-methionine = 2-methyladenosine(2503) in 23S rRNA + 5'-deoxyadenosine + L-methionine + 2 oxidized [2Fe-2S]-[ferredoxin] + S-adenosyl-L-homocysteine. The catalysed reaction is adenosine(37) in tRNA + 2 reduced [2Fe-2S]-[ferredoxin] + 2 S-adenosyl-L-methionine = 2-methyladenosine(37) in tRNA + 5'-deoxyadenosine + L-methionine + 2 oxidized [2Fe-2S]-[ferredoxin] + S-adenosyl-L-homocysteine. In terms of biological role, specifically methylates position 2 of adenine 2503 in 23S rRNA and position 2 of adenine 37 in tRNAs. In Prochlorococcus marinus (strain AS9601), this protein is Probable dual-specificity RNA methyltransferase RlmN.